The following is a 266-amino-acid chain: uncharacterized protein (266 aa).

The protein belongs to the chlamydial CPn_0087/CT3_09/TC_0583 family.

This is an uncharacterized protein from Chlamydia muridarum (strain MoPn / Nigg).